Consider the following 462-residue polypeptide: MAEKNMETIVNLAKHRGFVFPGSEIYGGLANTWDYGPLGVELKNNVKRAWWQKFVQQSPYNVGLDAAILMNPKTWEASGHLSNFNDPMIDNKDSKIRYRADKLIEDYMHAQGDEHFIADGMSFDEMKQFIDEKGIVCPVSGTANWTEIRQFNLMFKTFQGVTESSTNEIFLRPETAQGIFVNYKNVQRSMRKKLPFGIAQVGKSFRNEITPGNFIFRTREFEQMELEFFCKPGTEIEWQEYWKNFAAKWLKDLGIKEENTKLRDHDEDELSHYSNATTDIEYKFPFGWGELWGIASRTDFDLKAHMAASGDDFSYHDQETNEKYVPYCIEPSLGADRVTLAFLCDAYEEETLEGGDSRTVMRFHPALAPYKAAILPLSKKLSPDAMKVYEALSADFAIDFDESQSIGKRYRRQDEIGTPFCITFDFDSLEDNQVTVRDRDTMEQVRMPISEVKAFLDEKIKF.

Substrate contacts are provided by arginine 99 and glutamate 174. Residues 206 to 208 (RNE), 216 to 221 (FRTREF), 290 to 291 (EL), and 334 to 337 (GADR) each bind ATP. 221 to 225 (FEQME) lines the substrate pocket. Substrate is bound at residue 330 to 334 (EPSLG).

This sequence belongs to the class-II aminoacyl-tRNA synthetase family. In terms of assembly, homodimer.

It is found in the cytoplasm. It catalyses the reaction tRNA(Gly) + glycine + ATP = glycyl-tRNA(Gly) + AMP + diphosphate. Its function is as follows. Catalyzes the attachment of glycine to tRNA(Gly). The protein is Glycine--tRNA ligase of Macrococcus caseolyticus (strain JCSC5402) (Macrococcoides caseolyticum).